A 161-amino-acid polypeptide reads, in one-letter code: Allophycocyanin subunit alpha-B (161 aa).

Asn71 is subject to N4-methylasparagine. Cys81 is a binding site for (2R,3E)-phycocyanobilin.

It belongs to the phycobiliprotein family. In terms of assembly, heterohexamer of two alpha chains, one alpha-B chain and three beta chains. Post-translationally, contains one covalently linked bilin chromophore.

It localises to the cellular thylakoid membrane. In terms of biological role, light-harvesting photosynthetic bile pigment-protein from the phycobiliprotein complex. Allophycocyanin has a maximum absorption at approximately 654 nanometers. The chain is Allophycocyanin subunit alpha-B (apcD) from Synechocystis sp. (strain ATCC 27184 / PCC 6803 / Kazusa).